The primary structure comprises 1889 residues: E3 ubiquitin-protein ligase UBR3 (1889 aa).

The tract at residues 1–27 is disordered; sequence MAAAAAAAAVGDPQPPQPEAPAQGLAL. Residues 118 to 189 form a UBR-type zinc finger; it reads ALCGLVWTAN…ESGFCRRHQI (72 aa). A disordered region spans residues 338–362; sequence LGQIDSSDEEDQDGSQGLGKRKRVK. Phosphoserine is present on residues S343 and S344. 2 consecutive transmembrane segments (helical) span residues 761–781 and 919–939; these read MLEGALTFLVILLSLRLHLGM and LLHCKTLHIVLFTLLYKILMD. Positions 1167–1199 form a coiled coil; it reads KKITAAEKKTLDKEERRQKARERQQKLLAEFAS. Phosphoserine is present on S1199. The segment at 1306 to 1364 adopts an RING-type; degenerate zinc-finger fold; the sequence is DSSCLLAVSIGWEGGVYVQTCGHTLHIDCHKSYMESLRNDQVLQGFSVDKGEFTCPLCR. A helical membrane pass occupies residues 1807–1827; the sequence is QNCGAGTGIFLLINASVIIII.

Belongs to the E3 ubiquitin-protein ligase UBR1-like family. In terms of assembly, interacts with UBE2A and UBE2B. As to expression, expressed in numerous cells of the smell, touch, vision, hearing and taste senses. Expressed in cells of the olfactory pathway, including the olfactory cell layer of the main olfactory epithelium (MOE), a mitral neuron cell layer of the olfactory bulb (OB), and a pyramidal cell layer of the piriform cortex of the olfactory cortex (OC). Expressed in the vomeronasal sensory epithelium of the vomeronasal organ (VNO) and the mitral cells of the accessory olfactory bulb. Expressed in tactile tissues, including the dorsal root ganglion, trigeminal ganglion and follicle-sinus complexes. Expressed in cells between hair follicle and sinus and also in the region of the rete ridge collar. Expressed in taste buds of the fungiform, circumvallate, and foliate papillae. Expressed in the spiral ganglion, the organ of Corti of the cochlea in the inner ear, in the sensory epithelium of macula and vestibular ganglion of the balancing system (at protein level). Expressed in the liver and skeletal muscle.

The protein resides in the membrane. It catalyses the reaction S-ubiquitinyl-[E2 ubiquitin-conjugating enzyme]-L-cysteine + [acceptor protein]-L-lysine = [E2 ubiquitin-conjugating enzyme]-L-cysteine + N(6)-ubiquitinyl-[acceptor protein]-L-lysine.. It participates in protein modification; protein ubiquitination. Functionally, E3 ubiquitin-protein ligase which is a component of the N-end rule pathway. Does not bind to proteins bearing specific N-terminal residues that are destabilizing according to the N-end rule, leading to their ubiquitination and subsequent degradation. May play a role in Shh signaling by mediating the ubiquitination of Kif7. May be important for MYH9 function in certain tissues, possibly by regulating the ubiquitination of MYH9 and consequently affecting its interaction with MYO7A. This is E3 ubiquitin-protein ligase UBR3 (Ubr3) from Mus musculus (Mouse).